We begin with the raw amino-acid sequence, 524 residues long: MKKFDKLGLDNIKEIFHNLSYDELNAHEKANNEGLSTDNDTFCVDTGIFTGRSPKDKYFVKQDPSSKYIAWGKVNQPITKELFDKLLTKAKQELSGKKIYVQDVFCGASLQSRKAVRFVTEIAWQAHFVKNMFIRPSQEELENFKADFIVYNACKCINEDYKQDGLNSEVFVIFNVEENIAVIGGTWYGGEMKKGIFSMMNYWLPLENKLSMHCSANVGEKDDVALFFGLSGTGKTTLSTDPKRRLIGDDEHGWDDEGVFNFEGGCYAKTINLNPEHEPEIYGAIKRNALLENVVLRADKSVDYADASKTENTRVSYPIEHIENHEPSLKAGHPKNIIFLSADAFGILPPVSKLSKEQAMYYFLSGYTAKVAGTERGITEPQATFSACFGEPFMPLHPTVYARLLGEKIEKHEVNVYLVNTGWSGGSYSVGKRMSIKATRACINAILDGSITKCEFENFEVFDLAIPKALEGVESVLLNPINTWLDKNAYIATRDKLAHMFIQNFKRYEDVKEGIEFSKFGPKI.

The substrate site is built by arginine 52, tyrosine 188, and lysine 194. ATP is bound by residues lysine 194, histidine 213, and 229–237 (GLSGTGKTT). The Mn(2+) site is built by lysine 194 and histidine 213. Aspartate 250 lines the Mn(2+) pocket. Glutamate 278, arginine 314, and threonine 439 together coordinate ATP. Arginine 314 contributes to the substrate binding site.

The protein belongs to the phosphoenolpyruvate carboxykinase (ATP) family. Mn(2+) is required as a cofactor.

It localises to the cytoplasm. The catalysed reaction is oxaloacetate + ATP = phosphoenolpyruvate + ADP + CO2. The protein operates within carbohydrate biosynthesis; gluconeogenesis. Involved in the gluconeogenesis. Catalyzes the conversion of oxaloacetate (OAA) to phosphoenolpyruvate (PEP) through direct phosphoryl transfer between the nucleoside triphosphate and OAA. This Campylobacter jejuni (strain RM1221) protein is Phosphoenolpyruvate carboxykinase (ATP).